The chain runs to 397 residues: Elongation factor Tu (397 aa).

The tr-type G domain maps to 10-206 (KPHVNIGTIG…AIDSYIPTPE (197 aa)). Residues 19 to 26 (GHVDHGKT) are G1. Residue 19–26 (GHVDHGKT) coordinates GTP. Position 26 (Thr26) interacts with Mg(2+). Residues 60-64 (GITIN) are G2. Positions 81–84 (DCPG) are G3. GTP contacts are provided by residues 81-85 (DCPGH) and 136-139 (NKAD). Residues 136–139 (NKAD) are G4. Residues 174–176 (SAL) form a G5 region.

The protein belongs to the TRAFAC class translation factor GTPase superfamily. Classic translation factor GTPase family. EF-Tu/EF-1A subfamily. As to quaternary structure, monomer.

The protein localises to the cytoplasm. The enzyme catalyses GTP + H2O = GDP + phosphate + H(+). Functionally, GTP hydrolase that promotes the GTP-dependent binding of aminoacyl-tRNA to the A-site of ribosomes during protein biosynthesis. This is Elongation factor Tu from Clostridium botulinum (strain ATCC 19397 / Type A).